The primary structure comprises 365 residues: Uroporphyrinogen decarboxylase (365 aa).

Over residues 1–17 (MSANDSPSGQQTTTSAS) the composition is skewed to polar residues. The tract at residues 1–20 (MSANDSPSGQQTTTSASLDA) is disordered. Substrate is bound by residues 48–52 (RQAGR), aspartate 97, tyrosine 172, serine 227, and histidine 341.

It belongs to the uroporphyrinogen decarboxylase family. Homodimer.

It is found in the cytoplasm. The enzyme catalyses uroporphyrinogen III + 4 H(+) = coproporphyrinogen III + 4 CO2. The protein operates within porphyrin-containing compound metabolism; protoporphyrin-IX biosynthesis; coproporphyrinogen-III from 5-aminolevulinate: step 4/4. Functionally, catalyzes the decarboxylation of four acetate groups of uroporphyrinogen-III to yield coproporphyrinogen-III. In Streptomyces griseus subsp. griseus (strain JCM 4626 / CBS 651.72 / NBRC 13350 / KCC S-0626 / ISP 5235), this protein is Uroporphyrinogen decarboxylase.